We begin with the raw amino-acid sequence, 277 residues long: Large ribosomal subunit protein uL2 (277 aa).

The segment at 211–277 (SRWKGVRPTV…KLIVRGRKKK (67 aa)) is disordered.

Belongs to the universal ribosomal protein uL2 family. In terms of assembly, part of the 50S ribosomal subunit. Forms a bridge to the 30S subunit in the 70S ribosome.

One of the primary rRNA binding proteins. Required for association of the 30S and 50S subunits to form the 70S ribosome, for tRNA binding and peptide bond formation. It has been suggested to have peptidyltransferase activity; this is somewhat controversial. Makes several contacts with the 16S rRNA in the 70S ribosome. The sequence is that of Large ribosomal subunit protein uL2 from Staphylococcus epidermidis (strain ATCC 35984 / DSM 28319 / BCRC 17069 / CCUG 31568 / BM 3577 / RP62A).